Consider the following 171-residue polypeptide: Small ribosomal subunit protein uS13 (171 aa).

The interval 128–171 is disordered; the sequence is HERGQKVRGQRTKSTGRTEGTIGVNVEAIKEEQAEDDAADGGEE. Residues 160–171 show a composition bias toward acidic residues; that stretch reads QAEDDAADGGEE.

It belongs to the universal ribosomal protein uS13 family. As to quaternary structure, part of the 30S ribosomal subunit. Forms a loose heterodimer with protein S19. Forms two bridges to the 50S subunit in the 70S ribosome.

Functionally, located at the top of the head of the 30S subunit, it contacts several helices of the 16S rRNA. In the 70S ribosome it contacts the 23S rRNA (bridge B1a) and protein L5 of the 50S subunit (bridge B1b), connecting the 2 subunits; these bridges are implicated in subunit movement. This Halobacterium salinarum (strain ATCC 700922 / JCM 11081 / NRC-1) (Halobacterium halobium) protein is Small ribosomal subunit protein uS13.